A 501-amino-acid chain; its full sequence is Cytochrome P450 2S1 (501 aa).

Cys-441 contacts heme.

It belongs to the cytochrome P450 family. It depends on heme as a cofactor.

It is found in the endoplasmic reticulum membrane. It localises to the microsome membrane. The enzyme catalyses all-trans-retinoate + reduced [NADPH--hemoprotein reductase] + O2 = all-trans-5,6-epoxyretinoate + oxidized [NADPH--hemoprotein reductase] + H2O + H(+). The catalysed reaction is all-trans-retinoate + reduced [NADPH--hemoprotein reductase] + O2 = all-trans-4-hydroxyretinoate + oxidized [NADPH--hemoprotein reductase] + H2O + H(+). It catalyses the reaction (5S)-hydroperoxy-(6E,8Z,11Z,14Z)-eicosatetraenoate = 5-oxo-(6E,8Z,11Z,14Z)-eicosatetraenoate + H2O. It carries out the reaction (12S)-hydroperoxy-(5Z,8Z,10E,14Z)-eicosatetraenoate = 12-oxo-(5Z,8Z,10E,14Z)-eicosatetraenoate + H2O. The enzyme catalyses (15S)-hydroperoxy-(5Z,8Z,11Z,13E)-eicosatetraenoate = 15-oxo-(5Z,8Z,11Z,13E)-eicosatetraenoate + H2O. The catalysed reaction is prostaglandin H2 = thromboxane A2. It catalyses the reaction prostaglandin H2 = (12S)-hydroxy-(5Z,8E,10E)-heptadecatrienoate + malonaldehyde. It carries out the reaction (13S)-hydroperoxy-(9Z,11E)-octadecadienoate = 13-oxo-(9Z,11E)-octadecadienoate + H2O. It functions in the pathway lipid metabolism; fatty acid metabolism. Its function is as follows. A cytochrome P450 monooxygenase involved in the metabolism of retinoids and eicosanoids. In epidermis, may contribute to the oxidative metabolism of all-trans-retinoic acid. For this activity, uses molecular oxygen inserting one oxygen atom into a substrate, and reducing the second into a water molecule, with two electrons provided by NADPH via cytochrome P450 reductase (NADPH--hemoprotein reductase). Additionally, displays peroxidase and isomerase activities toward various oxygenated eicosanoids such as prostaglandin H2 (PGH2) and hydroperoxyeicosatetraenoates (HPETEs). Independently of cytochrome P450 reductase, NADPH, and O2, catalyzes the breakdown of PGH2 to hydroxyheptadecatrienoic acid (HHT) and malondialdehyde (MDA), which is known to act as a mediator of DNA damage. This Mus musculus (Mouse) protein is Cytochrome P450 2S1 (Cyp2s1).